A 554-amino-acid chain; its full sequence is Trimethyltridecatetraene synthase (554 aa).

The helical transmembrane segment at 1–21 (MSAAVALAVILAVYVVLRYIS) threads the bilayer. Residue Cys-464 participates in heme binding.

It belongs to the cytochrome P450 family. It depends on heme as a cofactor.

It is found in the membrane. The catalysed reaction is (6E,10E)-geranyllinalool + reduced [NADPH--hemoprotein reductase] + O2 = (3E,7E)-4,8,12-trimethyltrideca 1,3,7,11-tetraene + but-3-en-2-one + oxidized [NADPH--hemoprotein reductase] + 2 H2O + H(+). It participates in secondary metabolite biosynthesis; terpenoid biosynthesis. Functionally, component of the volatile terpenes biosynthesis pathways. Converts mainly geranyllinalool to trimethyltridecatetraene (TMTT). The protein is Trimethyltridecatetraene synthase of Zea mays (Maize).